Here is a 130-residue protein sequence, read N- to C-terminus: Protein ApaG (130 aa).

The region spanning 3 to 127 (SQTTRDIEVT…FSLDSPHEKP (125 aa)) is the ApaG domain.

The polypeptide is Protein ApaG (Paramagnetospirillum magneticum (strain ATCC 700264 / AMB-1) (Magnetospirillum magneticum)).